We begin with the raw amino-acid sequence, 312 residues long: Src-like-adapter (312 aa).

A disordered region spans residues 1-33; sequence MLCRLPGPSTSRGEKEMGNSMKSTPAPLERPLS. An SH3 domain is found at 38 to 98; the sequence is LESDFLAVLN…PGICVARVYH (61 aa). The region spanning 100 to 191 is the SH2 domain; sequence WLFEGLGRDK…GLCCVLTTPC (92 aa). The SLA C-terminal stretch occupies residues 206-312; the sequence is CTSPGSPVTL…TQKTKALTAT (107 aa). Ser274 carries the post-translational modification Phosphoserine.

As to quaternary structure, homodimer. Interacts with phosphorylated CBL, SYK and LAT. Homodimerization and interaction with phosphorylated CBL occurs via its C-terminal domain. Interacts with PDGFRB and EPHA2. Interacts with phosphorylated proteins ZAP70; CD3Z; VAV1 and LCP2 via its SH2 domain. Post-translationally, phosphorylated.

The protein localises to the cytoplasm. It is found in the endosome. Its function is as follows. Adapter protein, which negatively regulates T-cell receptor (TCR) signaling. Inhibits T-cell antigen-receptor induced activation of nuclear factor of activated T-cells. Involved in the negative regulation of positive selection and mitosis of T-cells. May act by linking signaling proteins such as ZAP70 with CBL, leading to a CBL dependent degradation of signaling proteins. The sequence is that of Src-like-adapter (Sla) from Rattus norvegicus (Rat).